Reading from the N-terminus, the 429-residue chain is Divergent protein kinase domain 2A (429 aa).

The N-terminal stretch at 1–34 (MLRLASLKFGRLFRYAKVLFAASLLVVMLLNTHS) is a signal peptide.

The protein belongs to the DIPK family.

It is found in the cytoplasmic vesicle. Its subcellular location is the COPI-coated vesicle. The protein resides in the golgi apparatus. The protein localises to the secreted. May play a role in cardiomyocyte proliferation through paracrine signaling and activation of the PPI3K-AKT-CDK7 signaling cascade. The protein is Divergent protein kinase domain 2A (dipk2a) of Xenopus tropicalis (Western clawed frog).